A 107-amino-acid chain; its full sequence is Ferredoxin-6 (107 aa).

Residues 2–106 (AKIIFIEHNG…GLVVHLPEKQ (105 aa)) enclose the 2Fe-2S ferredoxin-type domain. The [2Fe-2S] cluster site is built by Cys40, Cys46, Cys49, and Cys87.

Belongs to the adrenodoxin/putidaredoxin family. It depends on [2Fe-2S] cluster as a cofactor.

Its function is as follows. Ferredoxins are small electron carrier proteins that participate in various redox reactions. FdVI is an essential protein required for growth of R.capsulatus. May be involved in Fe-S cluster assembly. This chain is Ferredoxin-6, found in Rhodobacter capsulatus (Rhodopseudomonas capsulata).